Here is a 454-residue protein sequence, read N- to C-terminus: Inner membrane permease YgbN (454 aa).

Met-1 is a topological domain (periplasmic). The helical transmembrane segment at 2-22 (STITLLCIALAGVIMLLLLVI) threads the bilayer. At 23 to 27 (KAKVQ) the chain is on the cytoplasmic side. The chain crosses the membrane as a helical span at residues 28–48 (PFVALLLVSLLVALAAGIPAG). The Periplasmic segment spans residues 49 to 52 (EVGK). A helical transmembrane segment spans residues 53-73 (VMIAGMGGVLGSVTIIIGLGA). At 74 to 108 (MLGRMIEHSGGAESLANYFSRKLGDKRTIAALTLA) the chain is on the cytoplasmic side. A helical transmembrane segment spans residues 109–129 (AFFLGIPVFFDVGFIILAPII). The Periplasmic portion of the chain corresponds to 130–137 (YGFAKVAK). A helical membrane pass occupies residues 138 to 158 (ISPLKFGLPVAGIMLTVHVAV). Residues 159–174 (PPHPGPVAAAGLLHAD) lie on the Cytoplasmic side of the membrane. The chain crosses the membrane as a helical span at residues 175-195 (IGWLTIIGIAISIPVGVVGYF). At 196 to 235 (AAKIINKRQYAMSVEVLEQMQLAPASEEGATKLSDKINPP) the chain is on the periplasmic side. Residues 236–256 (GVALVTSLIVIPIAIIMAGTV) form a helical membrane-spanning segment. Residues 257-273 (SATLMPPSHPLLGTLQL) are Cytoplasmic-facing. The chain crosses the membrane as a helical span at residues 274–294 (IGSPMVALMIALVLAFWLLAL). At 295-305 (RRGWSLQHTSD) the chain is on the periplasmic side. A helical transmembrane segment spans residues 306 to 326 (IMGSALPTAAVVILVTGAGGV). Residues 327–341 (FGKVLVESGVGKALA) are Cytoplasmic-facing. The helical transmembrane segment at 342 to 362 (NMLQMIDLPLLPAAFIISLAL) threads the bilayer. Topologically, residues 363-383 (RASQGSATVAILTTGGLLSEA) are periplasmic. The helical transmembrane segment at 384 to 404 (VMGLNPIQCVLVTLAACFGGL) threads the bilayer. Residues 405–433 (GASHINDSGFWIVTKYLGLSVADGLKTWT) lie on the Cytoplasmic side of the membrane. The helical transmembrane segment at 434–454 (VLTTILGFTGFLITWCVWAVI) threads the bilayer.

Belongs to the GntP permease family.

It localises to the cell inner membrane. In Escherichia coli (strain K12), this protein is Inner membrane permease YgbN (ygbN).